A 111-amino-acid chain; its full sequence is Secreted RxLR effector protein 81 (111 aa).

The first 16 residues, 1–16, serve as a signal peptide directing secretion; the sequence is MLVSMLLIIFPNGVSL. The N-linked (GlcNAc...) asparagine glycan is linked to N52. The disordered stretch occupies residues 73-92; sequence KKFSSSDEDKSRDVRRRLRP. The short motif at 88-91 is the RxLR-dEER element; that stretch reads RRLR.

The protein belongs to the RxLR effector family.

It localises to the secreted. The protein localises to the host nucleus. The protein resides in the host cytoplasm. Its function is as follows. Secreted effector that partially suppresses the host cell death induced by cell death-inducing proteins. The polypeptide is Secreted RxLR effector protein 81 (Plasmopara viticola (Downy mildew of grapevine)).